A 286-amino-acid polypeptide reads, in one-letter code: MLISELLQTPLGIFFVGLFSLMVGSFLNVVIYRVPVMMDREEKQYAWQVFHGEDSVCPEIPKQRFNLLVPASRCPHCGHRIRAIENIPVISWLFLKGKCSGCGAAISARYLLVELLTAALSVIVAFHYHDPLSLGFALVFTWTLIALCFIDAEHQLLPDRLTLPLLWLGILAALFNVFINLESSVIGAMIGYLSLWSVYWLFKLITGREGMGYGDFKLLACLCAWQGAWMLPIILFSAAILGMIYALGIGLRMGKPMPFGPFLAIAGWLTFLYGAQIGQLFGYFPA.

Residues 11–31 (LGIFFVGLFSLMVGSFLNVVI) form a helical membrane-spanning segment. Cys-74, Cys-77, Cys-99, and Cys-102 together coordinate Zn(2+). 6 helical membrane-spanning segments follow: residues 106 to 126 (ISAR…IVAF), 132 to 152 (LSLG…FIDA), 161 to 181 (LTLP…FINL), 185 to 205 (VIGA…FKLI), 231 to 251 (LPII…GIGL), and 257 to 277 (MPFG…GAQI).

This sequence belongs to the peptidase A24 family. Zn(2+) serves as cofactor.

It localises to the cell inner membrane. It carries out the reaction Typically cleaves a -Gly-|-Phe- bond to release an N-terminal, basic peptide of 5-8 residues from type IV prepilin, and then N-methylates the new N-terminal amino group, the methyl donor being S-adenosyl-L-methionine.. In terms of biological role, plays an essential role in type IV pili and type II pseudopili formation by proteolytically removing the leader sequence from substrate proteins and subsequently monomethylating the alpha-amino group of the newly exposed N-terminal phenylalanine. This Dichelobacter nodosus (Bacteroides nodosus) protein is Prepilin leader peptidase/N-methyltransferase (fimP).